We begin with the raw amino-acid sequence, 330 residues long: Putative quinone oxidoreductase YhfP (330 aa).

NADP(+) contacts are provided by residues Tyr45, 160 to 163, 182 to 184, Arg202, Leu248, Ile262, Ser273, and Asn320; these read TGGV and TGN.

Belongs to the zinc-containing alcohol dehydrogenase family. Quinone oxidoreductase subfamily. Homodimer, or homotetramer.

The protein resides in the cytoplasm. This chain is Putative quinone oxidoreductase YhfP (yhfP), found in Bacillus subtilis (strain 168).